The primary structure comprises 137 residues: Ribosome-binding factor A (137 aa).

It belongs to the RbfA family. In terms of assembly, monomer. Binds 30S ribosomal subunits, but not 50S ribosomal subunits or 70S ribosomes.

Its subcellular location is the cytoplasm. Its function is as follows. One of several proteins that assist in the late maturation steps of the functional core of the 30S ribosomal subunit. Associates with free 30S ribosomal subunits (but not with 30S subunits that are part of 70S ribosomes or polysomes). Required for efficient processing of 16S rRNA. May interact with the 5'-terminal helix region of 16S rRNA. The sequence is that of Ribosome-binding factor A from Cereibacter sphaeroides (strain ATCC 17029 / ATH 2.4.9) (Rhodobacter sphaeroides).